The following is a 162-amino-acid chain: Fibroblast growth factor 22 (162 aa).

The signal sequence occupies residues 1-22 (MRSRLWLGLAWLLLARAPGAPG).

It belongs to the heparin-binding growth factors family. Interacts with FGFR1 and FGFR2. Interacts with FGFBP1. Preferentially expressed in skin; low expression in brain. Expressed in the inner root sheath of the hair follicle.

It is found in the secreted. Functionally, plays a role in the fasting response, glucose homeostasis, lipolysis and lipogenesis. Can stimulate cell proliferation (in vitro). May be involved in hair development. The chain is Fibroblast growth factor 22 (Fgf22) from Mus musculus (Mouse).